A 204-amino-acid chain; its full sequence is FMN-dependent NADH:quinone oxidoreductase (204 aa).

FMN contacts are provided by residues Ser10, 15-17 (SLS), and 139-142 (TSGG).

It belongs to the azoreductase type 1 family. Homodimer. It depends on FMN as a cofactor.

It catalyses the reaction 2 a quinone + NADH + H(+) = 2 a 1,4-benzosemiquinone + NAD(+). The catalysed reaction is N,N-dimethyl-1,4-phenylenediamine + anthranilate + 2 NAD(+) = 2-(4-dimethylaminophenyl)diazenylbenzoate + 2 NADH + 2 H(+). In terms of biological role, quinone reductase that provides resistance to thiol-specific stress caused by electrophilic quinones. Its function is as follows. Also exhibits azoreductase activity. Catalyzes the reductive cleavage of the azo bond in aromatic azo compounds to the corresponding amines. The sequence is that of FMN-dependent NADH:quinone oxidoreductase from Rhizobium leguminosarum bv. trifolii (strain WSM2304).